A 710-amino-acid chain; its full sequence is Polyribonucleotide nucleotidyltransferase (710 aa).

Residues D489 and D495 each contribute to the Mg(2+) site. The region spanning P556–I615 is the KH domain. The region spanning G625–K693 is the S1 motif domain. Residues S691–D710 are disordered. Basic and acidic residues predominate over residues P700–D710.

It belongs to the polyribonucleotide nucleotidyltransferase family. Requires Mg(2+) as cofactor.

The protein resides in the cytoplasm. The catalysed reaction is RNA(n+1) + phosphate = RNA(n) + a ribonucleoside 5'-diphosphate. Functionally, involved in mRNA degradation. Catalyzes the phosphorolysis of single-stranded polyribonucleotides processively in the 3'- to 5'-direction. The sequence is that of Polyribonucleotide nucleotidyltransferase from Streptococcus pyogenes serotype M49 (strain NZ131).